We begin with the raw amino-acid sequence, 311 residues long: Putative S-adenosyl-L-methionine-dependent methyltransferase MUL_4761 (311 aa).

S-adenosyl-L-methionine is bound by residues D132 and 161–162 (DL).

Belongs to the UPF0677 family.

Functionally, exhibits S-adenosyl-L-methionine-dependent methyltransferase activity. The protein is Putative S-adenosyl-L-methionine-dependent methyltransferase MUL_4761 of Mycobacterium ulcerans (strain Agy99).